The chain runs to 655 residues: HDA1 complex subunit 3 (655 aa).

The stretch at 482 to 632 forms a coiled coil; it reads HELEVENNLK…KTMDNLENLT (151 aa). The segment at 635 to 655 is disordered; it reads RVRTQNGNTKKKSRAKKPGNV. The span at 643–655 shows a compositional bias: basic residues; that stretch reads TKKKSRAKKPGNV.

This sequence belongs to the HDA2/3 family. HDA3 subfamily. Heterodimer with HDA2. Component of the HDA1 histone deacetylase complex composed of at least one HDA1 homodimer and one HDA2/HDA3 heterodimer. Interacts with HDA1 and HDA3.

Its subcellular location is the nucleus. Its function is as follows. Required for activity of HDA1 histone deacetylase complex. The HDA1 histone deacetylase complex is responsible for the deacetylation of lysine residues on the N-terminal part of the core histones (H2A, H2B, H3 and H4). Histone deacetylation gives a tag for epigenetic repression and plays an important role in transcriptional regulation, cell cycle progression and developmental events. The polypeptide is HDA1 complex subunit 3 (HDA3) (Saccharomyces cerevisiae (strain ATCC 204508 / S288c) (Baker's yeast)).